We begin with the raw amino-acid sequence, 51 residues long: MRNRWFSVMVGPSVRVNEWFSAYAMAGMAYSRVSTFSGDYLRVTDNKGRCE.

The protein belongs to the outer membrane OOP (TC 1.B.6) superfamily. Ail family.

This chain is Putative protein LomR (lomR), found in Escherichia coli (strain K12).